A 500-amino-acid polypeptide reads, in one-letter code: Centrosomal protein of 57 kDa (500 aa).

Low complexity predominate over residues 1–17; sequence MAAASVSAASGSHLSNS. Disordered stretches follow at residues 1-34 and 43-62; these read MAAA…HSSS and KPFL…LAYP. Over residues 18-34 the composition is skewed to polar residues; that stretch reads FAEPSRSNGSMVRHSSS. Phosphoserine occurs at positions 53 and 55. The interval 58 to 239 is centrosome localization domain (CLD); sequence TLAYPESNSR…KAAELQTGLE (182 aa). 2 coiled-coil regions span residues 63–242 and 392–492; these read ESNS…ETNR and ELKD…NSLQ. A mediates interaction with microtubules region spans residues 277–491; that stretch reads GAQPHYRLCL…KDMQSIQNSL (215 aa). The segment covering 434 to 450 has biased composition (basic and acidic residues); the sequence is KKELKATKKTLDEERNS. The disordered stretch occupies residues 434 to 472; sequence KKELKATKKTLDEERNSSSRSGITGTTNKKDFMKLRPGE. Residues 451–460 show a composition bias toward polar residues; sequence SSRSGITGTT. The segment covering 461 to 471 has biased composition (basic and acidic residues); it reads NKKDFMKLRPG.

The protein belongs to the translokin family. In terms of assembly, homodimer and homooligomer. Interacts with microtubules. Interacts with FGF2 and RAP80. Does not interact with FGF1 or FGF2 isoform 24 kDa. Ubiquitous.

Its subcellular location is the nucleus. It is found in the cytoplasm. It localises to the cytoskeleton. The protein localises to the microtubule organizing center. The protein resides in the centrosome. In terms of biological role, centrosomal protein which may be required for microtubule attachment to centrosomes. May act by forming ring-like structures around microtubules. Mediates nuclear translocation and mitogenic activity of the internalized growth factor FGF2, but that of FGF1. In Homo sapiens (Human), this protein is Centrosomal protein of 57 kDa (CEP57).